The following is a 913-amino-acid chain: DNA mismatch repair protein MutS (913 aa).

Residue 720 to 727 participates in ATP binding; it reads GPNASGKS.

Belongs to the DNA mismatch repair MutS family.

In terms of biological role, this protein is involved in the repair of mismatches in DNA. It is possible that it carries out the mismatch recognition step. This protein has a weak ATPase activity. This Prochlorococcus marinus (strain MIT 9312) protein is DNA mismatch repair protein MutS.